The chain runs to 137 residues: Large ribosomal subunit protein uL16 (137 aa).

It belongs to the universal ribosomal protein uL16 family. As to quaternary structure, part of the 50S ribosomal subunit.

Functionally, binds 23S rRNA and is also seen to make contacts with the A and possibly P site tRNAs. In Magnetococcus marinus (strain ATCC BAA-1437 / JCM 17883 / MC-1), this protein is Large ribosomal subunit protein uL16.